A 122-amino-acid polypeptide reads, in one-letter code: Small ribosomal subunit protein uS13 (122 aa).

A disordered region spans residues 93–122; the sequence is RRGLPVRGQRTKTNARTRKGPKKTIAGKKK.

It belongs to the universal ribosomal protein uS13 family. Part of the 30S ribosomal subunit. Forms a loose heterodimer with protein S19. Forms two bridges to the 50S subunit in the 70S ribosome.

Located at the top of the head of the 30S subunit, it contacts several helices of the 16S rRNA. In the 70S ribosome it contacts the 23S rRNA (bridge B1a) and protein L5 of the 50S subunit (bridge B1b), connecting the 2 subunits; these bridges are implicated in subunit movement. Contacts the tRNAs in the A and P-sites. This Corynebacterium jeikeium (strain K411) protein is Small ribosomal subunit protein uS13.